A 344-amino-acid chain; its full sequence is tRNA N6-adenosine threonylcarbamoyltransferase (344 aa).

2 residues coordinate Fe cation: H112 and H116. Residues 135-139, D168, G181, and N271 each bind substrate; that span reads LVSGG. D299 serves as a coordination point for Fe cation. The interval 323-344 is disordered; sequence RARPRWPLDPEAEPVRGAGVKA.

It belongs to the KAE1 / TsaD family. Requires Fe(2+) as cofactor.

It is found in the cytoplasm. It catalyses the reaction L-threonylcarbamoyladenylate + adenosine(37) in tRNA = N(6)-L-threonylcarbamoyladenosine(37) in tRNA + AMP + H(+). Its function is as follows. Required for the formation of a threonylcarbamoyl group on adenosine at position 37 (t(6)A37) in tRNAs that read codons beginning with adenine. Is involved in the transfer of the threonylcarbamoyl moiety of threonylcarbamoyl-AMP (TC-AMP) to the N6 group of A37, together with TsaE and TsaB. TsaD likely plays a direct catalytic role in this reaction. The chain is tRNA N6-adenosine threonylcarbamoyltransferase from Erythrobacter litoralis (strain HTCC2594).